Consider the following 103-residue polypeptide: Phosphoribosyl-ATP pyrophosphatase (103 aa).

It belongs to the PRA-PH family.

It localises to the cytoplasm. The catalysed reaction is 1-(5-phospho-beta-D-ribosyl)-ATP + H2O = 1-(5-phospho-beta-D-ribosyl)-5'-AMP + diphosphate + H(+). The protein operates within amino-acid biosynthesis; L-histidine biosynthesis; L-histidine from 5-phospho-alpha-D-ribose 1-diphosphate: step 2/9. The polypeptide is Phosphoribosyl-ATP pyrophosphatase (Cereibacter sphaeroides (strain ATCC 17029 / ATH 2.4.9) (Rhodobacter sphaeroides)).